The chain runs to 778 residues: Ribosome biogenesis protein BOP1 homolog (778 aa).

Positions 1 to 10 are enriched in basic residues; the sequence is MAKKQDRKRK. The tract at residues 1–152 is disordered; it reads MAKKQDRKRK…DSDTSDEEDI (152 aa). Acidic residues-rich tracts occupy residues 44-53, 60-72, and 84-105; these read EDSTDDEGID, SSED…DEEG, and SSDE…DEEE. Over residues 114–124 the composition is skewed to polar residues; it reads TTSSKAETNNE. Residues 142-151 show a composition bias toward acidic residues; sequence EDSDTSDEED. WD repeat units follow at residues 438–479, 481–519, 564–606, 609–647, 650–689, 693–732, and 748–778; these read GHTD…RTIE, EDVV…KLLI, NHFK…SQIP, KSKG…LIKK, TNSK…KPYQ, LHRN…DLLQ, and RDDF…RLYT.

The protein belongs to the WD repeat BOP1/ERB1 family.

It localises to the nucleus. It is found in the nucleolus. The protein localises to the nucleoplasm. In terms of biological role, required for maturation of ribosomal RNAs and formation of the large ribosomal subunit. The polypeptide is Ribosome biogenesis protein BOP1 homolog (Drosophila willistoni (Fruit fly)).